Reading from the N-terminus, the 126-residue chain is Holo-[acyl-carrier-protein] synthase (126 aa).

Mg(2+) contacts are provided by Asp8 and Glu56.

It belongs to the P-Pant transferase superfamily. AcpS family. Mg(2+) serves as cofactor.

Its subcellular location is the cytoplasm. The catalysed reaction is apo-[ACP] + CoA = holo-[ACP] + adenosine 3',5'-bisphosphate + H(+). Transfers the 4'-phosphopantetheine moiety from coenzyme A to a Ser of acyl-carrier-protein. The protein is Holo-[acyl-carrier-protein] synthase of Clostridium tetani (strain Massachusetts / E88).